Consider the following 511-residue polypeptide: Histidine ammonia-lyase (511 aa).

The 5-imidazolinone (Ala-Gly) cross-link spans 144 to 146 (ASG). Residue Ser145 is modified to 2,3-didehydroalanine (Ser).

The protein belongs to the PAL/histidase family. Post-translationally, contains an active site 4-methylidene-imidazol-5-one (MIO), which is formed autocatalytically by cyclization and dehydration of residues Ala-Ser-Gly.

It localises to the cytoplasm. The enzyme catalyses L-histidine = trans-urocanate + NH4(+). Its pathway is amino-acid degradation; L-histidine degradation into L-glutamate; N-formimidoyl-L-glutamate from L-histidine: step 1/3. The chain is Histidine ammonia-lyase from Halalkalibacterium halodurans (strain ATCC BAA-125 / DSM 18197 / FERM 7344 / JCM 9153 / C-125) (Bacillus halodurans).